Consider the following 510-residue polypeptide: Probable cytochrome P450 4aa1 (510 aa).

Cysteine 450 contributes to the heme binding site.

It belongs to the cytochrome P450 family. Heme is required as a cofactor.

It is found in the endoplasmic reticulum membrane. The protein localises to the microsome membrane. In terms of biological role, may be involved in the metabolism of insect hormones and in the breakdown of synthetic insecticides. In Drosophila melanogaster (Fruit fly), this protein is Probable cytochrome P450 4aa1 (Cyp4aa1).